A 223-amino-acid chain; its full sequence is Ribosome assembly factor mrt4 (223 aa).

Belongs to the universal ribosomal protein uL10 family. As to quaternary structure, associates with the pre-60S ribosomal particle.

It is found in the nucleus. Its subcellular location is the nucleolus. The protein localises to the cytoplasm. In terms of biological role, component of the ribosome assembly machinery. Nuclear paralog of the ribosomal protein P0, it binds pre-60S subunits at an early stage of assembly in the nucleolus, and is replaced by P0 in cytoplasmic pre-60S subunits and mature 80S ribosomes. This Dictyostelium discoideum (Social amoeba) protein is Ribosome assembly factor mrt4.